The primary structure comprises 512 residues: Hyaluronidase PH-20 (512 aa).

Residues M1–T35 form the signal peptide. A glycan (N-linked (GlcNAc...) asparagine) is linked at N46. 2 disulfides stabilise this stretch: C60–C351 and C223–C237. The active-site Proton donor is the E147. N-linked (GlcNAc...) asparagine glycosylation occurs at N165. N-linked (GlcNAc...) asparagine glycosylation is found at N293 and N368. Disulfide bonds link C376–C387, C381–C435, and C437–C464.

Belongs to the glycosyl hydrolase 56 family.

It is found in the cell membrane. It carries out the reaction Random hydrolysis of (1-&gt;4)-linkages between N-acetyl-beta-D-glucosamine and D-glucuronate residues in hyaluronate.. Its function is as follows. Involved in sperm-egg adhesion. Upon fertilization sperm must first penetrate a layer of cumulus cells that surrounds the egg before reaching the zona pellucida. The cumulus cells are embedded in a matrix containing hyaluronic acid which is formed prior to ovulation. This protein aids in penetrating the layer of cumulus cells by digesting hyaluronic acid. This is Hyaluronidase PH-20 (Spam1) from Mus musculus (Mouse).